The primary structure comprises 289 residues: uncharacterized protein (289 aa).

This is an uncharacterized protein from Archaeoglobus fulgidus (strain ATCC 49558 / DSM 4304 / JCM 9628 / NBRC 100126 / VC-16).